Consider the following 523-residue polypeptide: L-tyrosine:2-oxoglutarate aminotransferase ucdG (523 aa).

The protein belongs to the class-I pyridoxal-phosphate-dependent aminotransferase family. Homodimer. Pyridoxal 5'-phosphate is required as a cofactor.

The protein localises to the cytoplasm. The enzyme catalyses L-tyrosine + 2-oxoglutarate = 3-(4-hydroxyphenyl)pyruvate + L-glutamate. It participates in secondary metabolite biosynthesis. Functionally, nonribosomal peptide synthetase that mediates the biosynthesis of usterphenyllins and uscandidusins, p-terphenyl derivatives. Within the pathway, ucdG is probably involved in the conversion of L-tyrosine into 4-hydroxyphenylpyruvate (HPPA) as a precursor for the usterphenyllin and uscandidusin biosynthesis. UcdE further prenylates position C-14 of ring C of usterphenyllin B to form usterphenyllin A. The pathway begin with the biosynthesis of 4-hydroxyphenylpyruvate (HPPA) from L-tyrosine, possibly by the aminotransferase ucdG. The nonribosomal peptide synthetase ucdA then condenses two HPPA units to produce atromentin. The key step in this pathway is the reduction and dehydration of atromentin to form a terphenyl triol intermediate, performed by the NAD-dependent dehydrogenase ucdB. Further O-methylation by the methyltransferase ucdC forms terphenyllin carrying two methoxy moieties at C-9 and C-12, and subsequent dihydroxylation at C-3 of ring A and C-15 of ring C by the flavin-dependent oxygenase ucdD leads to 3,15-dihydroxyterphenyllin. Prenylation by ucdE at position C-5 of ring A forms usterphenyllin B, and is followed by a second prenylation at position C-14 of ring C to form usterphenyllin A. The following furan ring formation that leads to uscandidusins A and B was proven to be an unexpected spontaneous non-enzymatic reaction. The sequence is that of L-tyrosine:2-oxoglutarate aminotransferase ucdG from Aspergillus ustus.